The chain runs to 193 residues: Adenylate kinase (193 aa).

10 to 18 (GVPGVGGTT) contacts ATP.

The protein belongs to the archaeal adenylate kinase family. In terms of assembly, monomer.

Its subcellular location is the cytoplasm. It catalyses the reaction AMP + ATP = 2 ADP. This is Adenylate kinase from Methanococcus aeolicus (strain ATCC BAA-1280 / DSM 17508 / OCM 812 / Nankai-3).